Consider the following 159-residue polypeptide: MNIKLITVGKLKEKYLTEGIAEYTKRLSRFCKVQVVELIDEKTPENASEAQNNQIMAREGERIQAKIGSRDYVIVLAIEGKQFPSEEFSQKLEAIAVNGYSDITFIIGGSLGLSKAIKQRANLKMSFGLLTLPHQLMRLVLIEQIYRAFMIQQGSPYHK.

S-adenosyl-L-methionine-binding positions include leucine 76, glycine 108, and 127 to 132 (FGLLTL).

Belongs to the RNA methyltransferase RlmH family. In terms of assembly, homodimer.

The protein resides in the cytoplasm. It carries out the reaction pseudouridine(1915) in 23S rRNA + S-adenosyl-L-methionine = N(3)-methylpseudouridine(1915) in 23S rRNA + S-adenosyl-L-homocysteine + H(+). Its function is as follows. Specifically methylates the pseudouridine at position 1915 (m3Psi1915) in 23S rRNA. This chain is Ribosomal RNA large subunit methyltransferase H, found in Leuconostoc mesenteroides subsp. mesenteroides (strain ATCC 8293 / DSM 20343 / BCRC 11652 / CCM 1803 / JCM 6124 / NCDO 523 / NBRC 100496 / NCIMB 8023 / NCTC 12954 / NRRL B-1118 / 37Y).